A 485-amino-acid chain; its full sequence is Membrane-bound lytic murein transglycosylase F (485 aa).

An N-terminal signal peptide occupies residues 1-29; the sequence is MFAHTALRQRCAKWLFATGLFLLLGACVE. A non-LT domain region spans residues 30–267; sequence KPSTLERVKE…RLKDRYYGHV (238 aa). The tract at residues 268 to 485 is LT domain; it reads DVLGYVGAYT…DKPAEQSPPM (218 aa). The active site involves E314. Residues 465-485 are disordered; it reads EGNLHVPGVNKDKPAEQSPPM.

It in the N-terminal section; belongs to the bacterial solute-binding protein 3 family. This sequence in the C-terminal section; belongs to the transglycosylase Slt family.

It is found in the cell outer membrane. The enzyme catalyses Exolytic cleavage of the (1-&gt;4)-beta-glycosidic linkage between N-acetylmuramic acid (MurNAc) and N-acetylglucosamine (GlcNAc) residues in peptidoglycan, from either the reducing or the non-reducing ends of the peptidoglycan chains, with concomitant formation of a 1,6-anhydrobond in the MurNAc residue.. Its function is as follows. Murein-degrading enzyme that degrades murein glycan strands and insoluble, high-molecular weight murein sacculi, with the concomitant formation of a 1,6-anhydromuramoyl product. Lytic transglycosylases (LTs) play an integral role in the metabolism of the peptidoglycan (PG) sacculus. Their lytic action creates space within the PG sacculus to allow for its expansion as well as for the insertion of various structures such as secretion systems and flagella. This Pseudomonas putida (strain W619) protein is Membrane-bound lytic murein transglycosylase F.